A 196-amino-acid chain; its full sequence is V-type proton ATPase subunit E (196 aa).

Belongs to the V-ATPase E subunit family.

Functionally, produces ATP from ADP in the presence of a proton gradient across the membrane. This chain is V-type proton ATPase subunit E, found in Clostridium botulinum (strain Eklund 17B / Type B).